We begin with the raw amino-acid sequence, 406 residues long: Acetamidase (406 aa).

Over residues 387 to 399 (CRPRSSTSTSPRR) the composition is skewed to low complexity. Residues 387-406 (CRPRSSTSTSPRRQGPAEGR) form a disordered region.

It belongs to the acetamidase/formamidase family.

It catalyses the reaction a monocarboxylic acid amide + H2O = a monocarboxylate + NH4(+). The enzyme catalyses acetamide + H2O = acetate + NH4(+). In terms of biological role, allows acetamide to be used as a sole carbon or nitrogen source. This Mycolicibacterium smegmatis (Mycobacterium smegmatis) protein is Acetamidase (amdA).